The chain runs to 342 residues: Metalloendoproteinase 4-MMP (342 aa).

A signal peptide spans 1–34 (MHHHHHPCNRKPFTTIFSFFLLYLNLHNQQIIEA). The propeptide at 35 to 124 (RNPSQFTTNP…KTAPFHTGKK (90 aa)) is activation peptide. Residues 104–111 (PRCGFPDD) carry the Cysteine switch motif. Residues Cys106 and His252 each coordinate Zn(2+). Glu253 is a catalytic residue. Residues His256 and His262 each coordinate Zn(2+). Asn300 carries an N-linked (GlcNAc...) asparagine glycan. A lipid anchor (GPI-anchor amidated aspartate) is attached at Asp317. The propeptide at 318–342 (GSRIRSQGMIYSTLSTVIALCFLNW) is removed in mature form.

The protein belongs to the peptidase M10A family. Matrix metalloproteinases (MMPs) subfamily. It depends on Zn(2+) as a cofactor. As to expression, mostly expressed in flowers and stems, and, to a lower extent, in leaves and roots.

It is found in the cell membrane. Its activity is regulated as follows. Repressed by acetohydroxamic acid (AHA). Matrix metalloproteinases (MMPs) or matrixins may play a role in the degradation and remodeling of the extracellular matrix (ECM) during development or in response to stresses. Active on myelin basic protein (MBP) and, to some extent, on McaPLGLDpaAR-NH(2) (QF24) and beta-casein. The sequence is that of Metalloendoproteinase 4-MMP from Arabidopsis thaliana (Mouse-ear cress).